The sequence spans 602 residues: Pro-neuregulin-1, membrane-bound isoform (602 aa).

Residues 1-206 lie on the Extracellular side of the membrane; the sequence is MWATSEGPLQ…MEAEELYQKR (206 aa). N21 is a glycosylation site (N-linked (GlcNAc...) asparagine). The Ig-like C2-type domain occupies 29–123; it reads PKLKEMKNQE…DSTKASVIIT (95 aa). Cysteines 49 and 105 form a disulfide. N113 and N126 each carry an N-linked (GlcNAc...) asparagine glycan. Positions 137–181 constitute an EGF-like domain; the sequence is HLTKCDIKQKAFCVNGGECYMVKDLPNPPRYLCRCPNEFTGDRCQ. Intrachain disulfides connect C141–C155, C149–C169, and C171–C180. The helical transmembrane segment at 207-229 threads the bilayer; it reads VLTITGICIALLVVGIMCVVAYC. The Cytoplasmic segment spans residues 230–602; that stretch reads KTKKQRKKLH…VIANQDPIAV (373 aa). Disordered regions lie at residues 293 to 366, 391 to 421, 460 to 479, and 486 to 553; these read ETSF…EGNS, MTTP…PVSS, FNSF…PSPL, and EYET…FLSI. A compositionally biased stretch (low complexity) spans 294-314; it reads TSFSTSHYTSTTHHSMTVTQT. Residues 315 to 324 show a composition bias toward polar residues; sequence PSHSWSNGHT. The span at 325–341 shows a compositional bias: low complexity; the sequence is ESILSESHSVLVSSSVE. Positions 460-474 are enriched in polar residues; sequence FNSFHNNPTHESNSL. Over residues 504–514 the composition is skewed to basic residues; that stretch reads TNSRRVKRTKP. Over residues 527 to 536 the composition is skewed to low complexity; the sequence is DTSSQSTSSE.

It belongs to the neuregulin family. Post-translationally, proteolytic cleavage close to the plasma membrane on the external face leads to the release of the soluble growth factor form. Extensive glycosylation precedes the proteolytic cleavage.

The protein resides in the cell membrane. It localises to the secreted. In terms of biological role, direct ligand for the ERBB tyrosine kinase receptors. The multiple isoforms perform diverse functions: cysteine-rich domain containing isoforms (isoform 2-isoform 4) probably regulate the expression of nicotinic acetylcholine receptors at developing interneuronal synapses. Isoform Ig-NRG is required for the initial induction and/or maintenance of the mature levels of acetylcholine receptors at neuromuscular synapses. Binds to ERBB3 and integrins to form a complex which is essential for NRG1-ERBB signaling. In Gallus gallus (Chicken), this protein is Pro-neuregulin-1, membrane-bound isoform (NRG1).